Reading from the N-terminus, the 218-residue chain is Octanoyltransferase (218 aa).

Positions 32 to 218 (GEAAEAIWLL…LRTFPQHFPD (187 aa)) constitute a BPL/LPL catalytic domain. Substrate is bound by residues 71–78 (RGGQYTYH), 151–153 (AIG), and 164–166 (GLS). Cysteine 182 serves as the catalytic Acyl-thioester intermediate.

This sequence belongs to the LipB family.

Its subcellular location is the cytoplasm. The catalysed reaction is octanoyl-[ACP] + L-lysyl-[protein] = N(6)-octanoyl-L-lysyl-[protein] + holo-[ACP] + H(+). It functions in the pathway protein modification; protein lipoylation via endogenous pathway; protein N(6)-(lipoyl)lysine from octanoyl-[acyl-carrier-protein]: step 1/2. Catalyzes the transfer of endogenously produced octanoic acid from octanoyl-acyl-carrier-protein onto the lipoyl domains of lipoate-dependent enzymes. Lipoyl-ACP can also act as a substrate although octanoyl-ACP is likely to be the physiological substrate. In Cereibacter sphaeroides (strain ATCC 17023 / DSM 158 / JCM 6121 / CCUG 31486 / LMG 2827 / NBRC 12203 / NCIMB 8253 / ATH 2.4.1.) (Rhodobacter sphaeroides), this protein is Octanoyltransferase.